Consider the following 209-residue polypeptide: Uracil phosphoribosyltransferase (209 aa).

5-phospho-alpha-D-ribose 1-diphosphate contacts are provided by residues R79, R104, and 131–139; that span reads DPMLATGGS. Residues I194 and 199 to 201 contribute to the uracil site; that span reads GDA. D200 provides a ligand contact to 5-phospho-alpha-D-ribose 1-diphosphate.

Belongs to the UPRTase family. It depends on Mg(2+) as a cofactor.

The enzyme catalyses UMP + diphosphate = 5-phospho-alpha-D-ribose 1-diphosphate + uracil. The protein operates within pyrimidine metabolism; UMP biosynthesis via salvage pathway; UMP from uracil: step 1/1. Allosterically activated by GTP. Its function is as follows. Catalyzes the conversion of uracil and 5-phospho-alpha-D-ribose 1-diphosphate (PRPP) to UMP and diphosphate. The sequence is that of Uracil phosphoribosyltransferase from Symbiobacterium thermophilum (strain DSM 24528 / JCM 14929 / IAM 14863 / T).